The sequence spans 442 residues: Putative toxin YopC (442 aa).

It in the C-terminal section; belongs to the MbcT/ParT/Res family. As to quaternary structure, forms a complex with cognate antitoxin YopB.

Functionally, may be the toxic component of a type II toxin-antitoxin (TA) system. Neutralized by its cognate antitoxin YopB. The protein is Putative toxin YopC (yopC) of Bacillus subtilis (strain 168).